The primary structure comprises 263 residues: MPRLIPLLALLLCASASAELRADITKGTPHGYGAMKVYDGQTLLFQATTRGLSAVTASKFSPDGRWLVNLTDQGYVQLWDVHKGERVKTFLAPFARVLNADFTPDSTRLLLNFWGDSTPTNFWQGTRSSFWSLEPLQRLGTLDGKGWDIGYSGNVHFDAAGKRMVTASFRFFGGQAAAVYDAATGAPIATLSRVPYPPGALQTGGAGAADARLAPDGRRALVYDVAGRLAEYDAATSQLLKVRGKVDSAGAGAQLERFAREGK.

The WD repeat unit spans residues 53-89 (SAVTASKFSPDGRWLVNLTDQGYVQLWDVHKGERVKT).

This is an uncharacterized protein from Deinococcus radiodurans (strain ATCC 13939 / DSM 20539 / JCM 16871 / CCUG 27074 / LMG 4051 / NBRC 15346 / NCIMB 9279 / VKM B-1422 / R1).